An 88-amino-acid chain; its full sequence is Small ribosomal subunit protein bS16 (88 aa).

Belongs to the bacterial ribosomal protein bS16 family.

The chain is Small ribosomal subunit protein bS16 from Pelotomaculum thermopropionicum (strain DSM 13744 / JCM 10971 / SI).